The sequence spans 427 residues: Hydroxylamine reductase (427 aa).

[4Fe-4S] cluster contacts are provided by cysteine 3, cysteine 6, cysteine 15, and cysteine 21. 8 residues coordinate hybrid [4Fe-2O-2S] cluster: histidine 129, glutamate 153, cysteine 197, cysteine 283, cysteine 311, cysteine 336, glutamate 370, and lysine 372. The residue at position 283 (cysteine 283) is a Cysteine persulfide.

It belongs to the HCP family. Requires [4Fe-4S] cluster as cofactor. It depends on hybrid [4Fe-2O-2S] cluster as a cofactor.

The protein localises to the cytoplasm. It carries out the reaction A + NH4(+) + H2O = hydroxylamine + AH2 + H(+). In terms of biological role, catalyzes the reduction of hydroxylamine to form NH(3) and H(2)O. The polypeptide is Hydroxylamine reductase (Methanothermobacter thermautotrophicus (strain ATCC 29096 / DSM 1053 / JCM 10044 / NBRC 100330 / Delta H) (Methanobacterium thermoautotrophicum)).